Reading from the N-terminus, the 464-residue chain is tRNA modification GTPase MnmE (464 aa).

Residues arginine 25, glutamate 87, and lysine 130 each coordinate (6S)-5-formyl-5,6,7,8-tetrahydrofolate. Positions 226-386 (GLSVVLAGQP…LRAELLRIAG (161 aa)) constitute a TrmE-type G domain. Asparagine 236 is a binding site for K(+). Residues 236-241 (NVGKSS), 255-261 (TPIAGTT), and 280-283 (DTAG) each bind GTP. Serine 240 is a Mg(2+) binding site. Residues threonine 255, isoleucine 257, and threonine 260 each contribute to the K(+) site. Residue threonine 261 participates in Mg(2+) binding. Residue lysine 464 coordinates (6S)-5-formyl-5,6,7,8-tetrahydrofolate.

The protein belongs to the TRAFAC class TrmE-Era-EngA-EngB-Septin-like GTPase superfamily. TrmE GTPase family. Homodimer. Heterotetramer of two MnmE and two MnmG subunits. Requires K(+) as cofactor.

The protein resides in the cytoplasm. Its function is as follows. Exhibits a very high intrinsic GTPase hydrolysis rate. Involved in the addition of a carboxymethylaminomethyl (cmnm) group at the wobble position (U34) of certain tRNAs, forming tRNA-cmnm(5)s(2)U34. The sequence is that of tRNA modification GTPase MnmE from Burkholderia lata (strain ATCC 17760 / DSM 23089 / LMG 22485 / NCIMB 9086 / R18194 / 383).